A 167-amino-acid polypeptide reads, in one-letter code: Mediator of RNA polymerase II transcription subunit 10 (167 aa).

Residues 53-88 (LSTHTKPQPPSQDEEQKEKQDDTPEGSANDPLLRDI) are disordered.

Belongs to the Mediator complex subunit 10 family. As to quaternary structure, component of the Mediator complex.

Its subcellular location is the nucleus. Functionally, component of the Mediator complex, a coactivator involved in the regulated transcription of nearly all RNA polymerase II-dependent genes. Mediator functions as a bridge to convey information from gene-specific regulatory proteins to the basal RNA polymerase II transcription machinery. Mediator is recruited to promoters by direct interactions with regulatory proteins and serves as a scaffold for the assembly of a functional preinitiation complex with RNA polymerase II and the general transcription factors. The sequence is that of Mediator of RNA polymerase II transcription subunit 10 (nut2) from Neosartorya fischeri (strain ATCC 1020 / DSM 3700 / CBS 544.65 / FGSC A1164 / JCM 1740 / NRRL 181 / WB 181) (Aspergillus fischerianus).